A 391-amino-acid polypeptide reads, in one-letter code: Processive diacylglycerol beta-glucosyltransferase (391 aa).

It belongs to the glycosyltransferase 28 family. UgtP subfamily.

It is found in the cell membrane. It catalyses the reaction a 1,2-diacyl-3-O-(beta-D-glucopyranosyl)-sn-glycerol + UDP-alpha-D-glucose = a 1,2-diacyl-3-O-(beta-D-Glc-(1-&gt;6)-beta-D-Glc)-sn-glycerol + UDP + H(+). The enzyme catalyses a 1,2-diacyl-sn-glycerol + UDP-alpha-D-glucose = a 1,2-diacyl-3-O-(beta-D-glucopyranosyl)-sn-glycerol + UDP + H(+). The protein operates within glycolipid metabolism; diglucosyl-diacylglycerol biosynthesis. In terms of biological role, processive glucosyltransferase involved in the biosynthesis of both the bilayer- and non-bilayer-forming membrane glucolipids. Is able to successively transfer two glucosyl residues to diacylglycerol (DAG), thereby catalyzing the formation of beta-monoglucosyl-DAG (3-O-(beta-D-glucopyranosyl)-1,2-diacyl-sn-glycerol) and beta-diglucosyl-DAG (3-O-(beta-D-glucopyranosyl-beta-(1-&gt;6)-D-glucopyranosyl)-1,2-diacyl-sn-glycerol). Beta-diglucosyl-DAG is the predominant glycolipid found in Bacillales and is also used as a membrane anchor for lipoteichoic acid (LTA). In Staphylococcus aureus (strain MW2), this protein is Processive diacylglycerol beta-glucosyltransferase.